The chain runs to 106 residues: Thiosulfate sulfurtransferase GlpE (106 aa).

Residues 17–105 (SRGEARLVDI…WHRASLPVEA (89 aa)) form the Rhodanese domain. The active-site Cysteine persulfide intermediate is the Cys65.

It belongs to the GlpE family.

It localises to the cytoplasm. The catalysed reaction is thiosulfate + hydrogen cyanide = thiocyanate + sulfite + 2 H(+). It carries out the reaction thiosulfate + [thioredoxin]-dithiol = [thioredoxin]-disulfide + hydrogen sulfide + sulfite + 2 H(+). Functionally, transferase that catalyzes the transfer of sulfur from thiosulfate to thiophilic acceptors such as cyanide or dithiols. May function in a CysM-independent thiosulfate assimilation pathway by catalyzing the conversion of thiosulfate to sulfite, which can then be used for L-cysteine biosynthesis. The sequence is that of Thiosulfate sulfurtransferase GlpE from Vibrio vulnificus (strain CMCP6).